The chain runs to 97 residues: Homeobox protein HD-9 (97 aa).

Residues 6–65 constitute a DNA-binding region (homeobox); it reads MPAKKSRLSKAQRDFLDTYFEVNPHPNTQERAYIASQSLVSEEKIRNWFQNRRTRERGDC.

It is found in the nucleus. This chain is Homeobox protein HD-9 (HD-9), found in Encephalitozoon cuniculi (strain GB-M1) (Microsporidian parasite).